The sequence spans 292 residues: NAD kinase (292 aa).

Catalysis depends on Asp73, which acts as the Proton acceptor. Residues 73–74 (DG), 147–148 (NE), His158, Arg175, Asp177, 188–193 (TAYSLS), and Gln247 contribute to the NAD(+) site.

The protein belongs to the NAD kinase family. Requires a divalent metal cation as cofactor.

The protein localises to the cytoplasm. The enzyme catalyses NAD(+) + ATP = ADP + NADP(+) + H(+). In terms of biological role, involved in the regulation of the intracellular balance of NAD and NADP, and is a key enzyme in the biosynthesis of NADP. Catalyzes specifically the phosphorylation on 2'-hydroxyl of the adenosine moiety of NAD to yield NADP. In Photorhabdus laumondii subsp. laumondii (strain DSM 15139 / CIP 105565 / TT01) (Photorhabdus luminescens subsp. laumondii), this protein is NAD kinase.